The chain runs to 186 residues: Casparian strip membrane protein 5 (186 aa).

Residues 1–23 (MEHGEISSKAPLVAPVAAGVNRA) lie on the Cytoplasmic side of the membrane. The helical transmembrane segment at 24-44 (VAVVDTFLRFIAIIGTIGSAI) threads the bilayer. Residues 45-73 (AMGTTNETLPFFTQFIQFEAKYSDLPSFT) lie on the Extracellular side of the membrane. N-linked (GlcNAc...) asparagine glycosylation is present at asparagine 50. Residues 74 to 94 (FFVAANAVVCTYLVLSIPLSI) traverse the membrane as a helical segment. Topologically, residues 95 to 106 (VHILRPRARYSR) are cytoplasmic. A helical membrane pass occupies residues 107 to 127 (LFLVFFDTAMLALLTAGASAA). Residues 128 to 160 (AAIVYLAHKGNVRANWFSICQQFDSFCERISGS) are Extracellular-facing. The helical transmembrane segment at 161–181 (LIGSFAAMVLLVVLITLSAFA) threads the bilayer. At 182–186 (LARRH) the chain is on the cytoplasmic side.

The protein belongs to the Casparian strip membrane proteins (CASP) family. Homodimer and heterodimers.

Its subcellular location is the cell membrane. In terms of biological role, regulates membrane-cell wall junctions and localized cell wall deposition. Required for establishment of the Casparian strip membrane domain (CSD) and the subsequent formation of Casparian strips, a cell wall modification of the root endodermis that determines an apoplastic barrier between the intraorganismal apoplasm and the extraorganismal apoplasm and prevents lateral diffusion. This is Casparian strip membrane protein 5 from Oryza sativa subsp. japonica (Rice).